Consider the following 23-residue polypeptide: Septenin 2a (23 aa).

In terms of tissue distribution, expressed in skin glands.

It localises to the secreted. Functionally, may act as an antimicrobial peptide. This chain is Septenin 2a, found in Osteopilus septentrionalis (Cuban treefrog).